A 311-amino-acid polypeptide reads, in one-letter code: Ciliary microtubule inner protein 2B (311 aa).

2 disordered regions span residues Pro64–Pro93 and Gln150–Met183.

It belongs to the CIMIP2 family. In terms of tissue distribution, expressed in airway epithelial cells.

Its subcellular location is the cytoplasm. It is found in the cytoskeleton. It localises to the cilium axoneme. Microtubule inner protein (MIP) part of the dynein-decorated doublet microtubules (DMTs) in cilia axoneme, which is required for motile cilia beating. The sequence is that of Ciliary microtubule inner protein 2B (cimip2b) from Xenopus laevis (African clawed frog).